We begin with the raw amino-acid sequence, 89 residues long: Islet amyloid polypeptide (89 aa).

Positions 1–22 are cleaved as a signal peptide; sequence MCLLKLPVVLIVLLVALHHLKA. The propeptide occupies 23–31; the sequence is TPIESNQVE. Cys35 and Cys40 form a disulfide bridge. Position 70 is a tyrosine amide (Tyr70). Residues 74 to 89 constitute a propeptide that is removed on maturation; that stretch reads STVDILNREPLNYLPF.

Belongs to the calcitonin family. As to quaternary structure, can form homodimers. Interacts with IDE and INS. Interaction with INS inhibits homodimerization and fibril formation.

It localises to the secreted. Functionally, amylin/IAPP is a glucoregulatory peptide hormone that plays an important role in the regulation of energy homeostasis. Selectively inhibits insulin-stimulated glucose utilization and glycogen deposition in muscle, while not affecting adipocyte glucose metabolism. IAPP function is mediated by the CALCR-RAMPs (AMYRs) receptor complexes. Amylin can also bind CALCR receptor in the absence of RAMPs, although it is more selective for AMYRs. This chain is Islet amyloid polypeptide (IAPP), found in Felis catus (Cat).